A 176-amino-acid polypeptide reads, in one-letter code: Ribosome rescue factor SmrB (176 aa).

Residues 97–172 (LDMHGMTQQE…GNGALLVLID (76 aa)) form the Smr domain.

The protein belongs to the SmrB family. As to quaternary structure, associates with collided ribosomes, but not with correctly translating polysomes.

Acts as a ribosome collision sensor. Detects stalled/collided disomes (pairs of ribosomes where the leading ribosome is stalled and a second ribosome has collided with it) and endonucleolytically cleaves mRNA at the 5' boundary of the stalled ribosome. Stalled/collided disomes form a new interface (primarily via the 30S subunits) that binds SmrB. Cleaved mRNA becomes available for tmRNA ligation, leading to ribosomal subunit dissociation and rescue of stalled ribosomes. The chain is Ribosome rescue factor SmrB from Photobacterium profundum (strain SS9).